Consider the following 1056-residue polypeptide: E3 SUMO-protein ligase ZNF451 (1056 aa).

The tract at residues 1–39 (MGDPGPEIIESVPPAGPEASESTTDENEDDIQFVSEGPL) is disordered. Residues 1 to 246 (MGDPGPEIIE…AADGHSNSLL (246 aa)) are sufficient for E3 SUMO-protein ligase activity. The important for interaction with SUMO1 and SUMO2 stretch occupies residues 1-344 (MGDPGPEIIE…RVRCQNAGPV (344 aa)). The interval 30-37 (DIQFVSEG) is interaction with SUMO2 1. Residues 38-41 (PLRP) carry the PLRP motif. The interaction with SUMO2 2 stretch occupies residues 42–50 (VLEYIDLVS). Glycyl lysine isopeptide (Lys-Gly) (interchain with G-Cter in SUMO2) cross-links involve residues Lys-75, Lys-77, Lys-106, Lys-139, and Lys-153. Ser-155 bears the Phosphoserine mark. Arg-158 carries the omega-N-methylarginine modification. Residue Lys-167 forms a Glycyl lysine isopeptide (Lys-Gly) (interchain with G-Cter in SUMO2) linkage. The segment at 168–521 (PILCPIMHCN…HMSRFHGGAH (354 aa)) is important for interaction with SMAD4. The C2H2-type 1 zinc finger occupies 169 to 195 (ILCPIMHCNKEFDNGHLLLGHLKRFDH). Residues 212–234 (FACAVCYEHFVTQQQYKDHLLSR) form a C2H2-type 2; degenerate zinc finger. The C2H2-type 3 zinc finger occupies 253–277 (YACPQCFLLFSTKDECLKHMSTKNH). Residues Lys-270, Lys-275, Lys-283, Lys-288, Lys-301, and Lys-309 each participate in a glycyl lysine isopeptide (Lys-Gly) (interchain with G-Cter in SUMO2) cross-link. Residues 315-338 (VKCVACHQTLRSHMELTAHFRVRC) form a C2H2-type 4; atypical zinc finger. The C2H2-type 5 zinc finger occupies 362–385 (GYCSDCNQVFMDVASTQSHKNSGH). Residue Lys-420 forms a Glycyl lysine isopeptide (Lys-Gly) (interchain with G-Cter in SUMO2) linkage. Ser-429 is subject to Phosphoserine. Lys-431 is covalently cross-linked (Glycyl lysine isopeptide (Lys-Gly) (interchain with G-Cter in SUMO2)). 2 consecutive C2H2-type zinc fingers follow at residues 494–517 (YKCVVCGKVCEDSGVMRLHMSRFH) and 527–550 (FWCRTCKKELVKKDAIMAHITEFH). Glycyl lysine isopeptide (Lys-Gly) (interchain with G-Cter in SUMO2) cross-links involve residues Lys-539 and Lys-583. A C2H2-type 8; atypical zinc finger spans residues 604 to 629 (WQCRICEDMFESQECVKQHCMSLTSH). 2 consecutive C2H2-type zinc fingers follow at residues 634–657 (YSCAHCRKTFHKVETLYRHCQDEH) and 665–688 (YFCGLCDLIFNKEEEFLSHYKEHH). Lys-645 participates in a covalent cross-link: Glycyl lysine isopeptide (Lys-Gly) (interchain with G-Cter in SUMO2). A Glycyl lysine isopeptide (Lys-Gly) (interchain with G-Cter in SUMO1); alternate cross-link involves residue Lys-704. A Glycyl lysine isopeptide (Lys-Gly) (interchain with G-Cter in SUMO2); alternate cross-link involves residue Lys-704. Residues Lys-729 and Lys-746 each participate in a glycyl lysine isopeptide (Lys-Gly) (interchain with G-Cter in SUMO2) cross-link. C2H2-type zinc fingers lie at residues 751 to 774 (FRCSSCSATAQNVTDINTHVCQVH) and 787 to 810 (IKCGICTKAFQNTESAQQHFHRKH). Glycyl lysine isopeptide (Lys-Gly) (interchain with G-Cter in SUMO2) cross-links involve residues Lys-788, Lys-815, Lys-843, Lys-849, Lys-947, Lys-988, and Lys-989. 2 disordered regions span residues 806 to 830 (FHRKHAALQKPTATPGGANRSSTCQ) and 839 to 858 (EKNLKQPSSQKHSDVEKGAE). Over residues 849-858 (KHSDVEKGAE) the composition is skewed to basic and acidic residues. Positions 1019-1045 (KECDSDDSSGMKGSPAEELRATEDVEL) are disordered. The span at 1033 to 1045 (PAEELRATEDVEL) shows a compositional bias: basic and acidic residues. An important for ubiquitin binding region spans residues 1045–1056 (LEEAIRRSLEEM).

This sequence belongs to the krueppel C2H2-type zinc-finger protein family. As to quaternary structure, homooligomer. Interacts (via N-terminal region) with SUMO1. Interacts (via N-terminal region) with SUMO2. Interacts simultaneously with two SUMO2 chains. Identified in a complex with SUMO2 and UBE2I/UBC9, where one ZNF451 interacts with one UBE2I/UBC9 and two SUMO2 chains, one bound to the UBE2I/UBC9 active site and the other to another region of the same UBE2I/UBC9 molecule. Interacts (via C-terminus) with ubiquitin. Interacts (via N-terminal zinc-finger domains) with SMAD4 (via MH2 domain). Interacts with SMAD2 and SMAD3. Identified in a complex that contains at least ZNF451, SMAD2, SMAD3 and SMAD4. Interacts with EP300. Inhibits interaction between EP300 and the SMAD4 complex. Interacts with SIMC1. Post-translationally, sumoylated. Predominantly sumoylated on the N-terminal region that is important for interaction with SUMO1 and SUMO2. Sumoylation is important for localization in nuclear granules; desumoylation leads to diffuse nucleoplasmic location. Autosumoylated (in vitro). Sumoylation enhances E3 SUMO-protein ligase activity.

It localises to the nucleus. Its subcellular location is the PML body. The protein localises to the nucleoplasm. Its pathway is protein modification; protein sumoylation. Its function is as follows. E3 SUMO-protein ligase; has a preference for SUMO2 and SUMO3 and facilitates UBE2I/UBC9-mediated sumoylation of target proteins. Plays a role in protein SUMO2 modification in response to stress caused by DNA damage and by proteasome inhibitors (in vitro). Required for MCM4 sumoylation. Has no activity with SUMO1. Preferentially transfers an additional SUMO2 chain onto the SUMO2 consensus site 'Lys-11'. Negatively regulates transcriptional activation mediated by the SMAD4 complex in response to TGF-beta signaling. Inhibits EP300-mediated acetylation of histone H3 at 'Lys-9'. Plays a role in regulating the transcription of AR targets. This is E3 SUMO-protein ligase ZNF451 (Znf451) from Mus musculus (Mouse).